The following is a 127-amino-acid chain: MPTINQLVRKGRITPEEKSKSRALHSCPQRRGVCLQVMTRTPKKPNSALRKVAKVRLTNGEEVIAYIGGEGHNLQEHSIVLVRGGRVKDLPGVRYHIVRGALDCLGVDKRRQGRSKYGAKRPKAAAK.

Aspartate 89 carries the post-translational modification 3-methylthioaspartic acid.

The protein belongs to the universal ribosomal protein uS12 family. Part of the 30S ribosomal subunit. Contacts proteins S8 and S17. May interact with IF1 in the 30S initiation complex.

With S4 and S5 plays an important role in translational accuracy. Functionally, interacts with and stabilizes bases of the 16S rRNA that are involved in tRNA selection in the A site and with the mRNA backbone. Located at the interface of the 30S and 50S subunits, it traverses the body of the 30S subunit contacting proteins on the other side and probably holding the rRNA structure together. The combined cluster of proteins S8, S12 and S17 appears to hold together the shoulder and platform of the 30S subunit. This is Small ribosomal subunit protein uS12 from Akkermansia muciniphila (strain ATCC BAA-835 / DSM 22959 / JCM 33894 / BCRC 81048 / CCUG 64013 / CIP 107961 / Muc).